The following is a 373-amino-acid chain: NADPH-dependent 3-keto-steroid reductase Hsd3b5 (373 aa).

Residues 10–15, tyrosine 155, and lysine 159 contribute to the NADP(+) site; that span reads GAGGFL. Lysine 159 serves as the catalytic Proton donor. Residues 288 to 308 form a helical membrane-spanning segment; sequence LPLLYWLAFLLETVSFLLRPF. N6-acetyllysine is present on lysine 350.

The protein belongs to the 3-beta-HSD family. As to expression, expressed predominantly in male liver.

It localises to the endoplasmic reticulum membrane. Its subcellular location is the mitochondrion membrane. The enzyme catalyses a 3beta-hydroxysteroid + NADP(+) = a 3-oxosteroid + NADPH + H(+). It catalyses the reaction 5alpha-androstane-3beta,17beta-diol + NADP(+) = 17beta-hydroxy-5alpha-androstan-3-one + NADPH + H(+). It carries out the reaction 3beta-hydroxy-5alpha-androstan-17-one + NADP(+) = 5alpha-androstan-3,17-dione + NADPH + H(+). It participates in steroid metabolism. Responsible for the reduction of the oxo group on the C-3 of 5alpha-androstane steroids. Catalyzes the conversion of dihydrotestosterone to its inactive form 5alpha-androstanediol, that does not bind androgen receptor/AR. Also converts androstanedione, a precursor of testosterone and estrone, to epiandrosterone. Does not function as an isomerase. The sequence is that of NADPH-dependent 3-keto-steroid reductase Hsd3b5 from Rattus norvegicus (Rat).